Here is an 847-residue protein sequence, read N- to C-terminus: Alanine--tRNA ligase (847 aa).

Residues His-554, His-558, Cys-656, and His-660 each contribute to the Zn(2+) site.

Belongs to the class-II aminoacyl-tRNA synthetase family. It depends on Zn(2+) as a cofactor.

The protein resides in the cytoplasm. The enzyme catalyses tRNA(Ala) + L-alanine + ATP = L-alanyl-tRNA(Ala) + AMP + diphosphate. Catalyzes the attachment of alanine to tRNA(Ala) in a two-step reaction: alanine is first activated by ATP to form Ala-AMP and then transferred to the acceptor end of tRNA(Ala). Also edits incorrectly charged Ser-tRNA(Ala) and Gly-tRNA(Ala) via its editing domain. This is Alanine--tRNA ligase from Helicobacter pylori (strain HPAG1).